The primary structure comprises 423 residues: Glucose-1-phosphate adenylyltransferase (423 aa).

Alpha-D-glucose 1-phosphate-binding positions include Tyr110, Gly175, Glu190–Lys191, and Ser208.

The protein belongs to the bacterial/plant glucose-1-phosphate adenylyltransferase family. In terms of assembly, homotetramer.

The catalysed reaction is alpha-D-glucose 1-phosphate + ATP + H(+) = ADP-alpha-D-glucose + diphosphate. It functions in the pathway glycan biosynthesis; glycogen biosynthesis. Its function is as follows. Involved in the biosynthesis of ADP-glucose, a building block required for the elongation reactions to produce glycogen. Catalyzes the reaction between ATP and alpha-D-glucose 1-phosphate (G1P) to produce pyrophosphate and ADP-Glc. In Nitrosococcus oceani (strain ATCC 19707 / BCRC 17464 / JCM 30415 / NCIMB 11848 / C-107), this protein is Glucose-1-phosphate adenylyltransferase.